The primary structure comprises 273 residues: 2-dehydro-3-deoxyphosphooctonate aldolase (273 aa).

The protein belongs to the KdsA family.

The protein resides in the cytoplasm. The enzyme catalyses D-arabinose 5-phosphate + phosphoenolpyruvate + H2O = 3-deoxy-alpha-D-manno-2-octulosonate-8-phosphate + phosphate. It participates in carbohydrate biosynthesis; 3-deoxy-D-manno-octulosonate biosynthesis; 3-deoxy-D-manno-octulosonate from D-ribulose 5-phosphate: step 2/3. The protein operates within bacterial outer membrane biogenesis; lipopolysaccharide biosynthesis. The sequence is that of 2-dehydro-3-deoxyphosphooctonate aldolase from Nitratidesulfovibrio vulgaris (strain DP4) (Desulfovibrio vulgaris).